Here is a 78-residue protein sequence, read N- to C-terminus: MVNQGSPQLVSLVDPYVYQTIKKLIGSRFVIQTVRDTVRGRLIDVKPDHITIEGARNSVCLIRIQHMISVTPDYSERV.

This is an uncharacterized protein from Bacillus subtilis (strain 168).